Here is a 287-residue protein sequence, read N- to C-terminus: NADH-cytochrome b5 reductase 1 (287 aa).

Residues 5–25 (FEALVTALVLAVSFIFIYGKF) form a helical membrane-spanning segment. Positions 41-145 (KDWQEFSLLT…RGPKGFYHYE (105 aa)) constitute an FAD-binding FR-type domain. Residues 125 to 142 (AELAIGDRIKVRGPKGFY) and 151 to 183 (EIGMIAGGTGISPMYQIIRAIFSNPRDKTRVCL) each bind FAD.

Belongs to the flavoprotein pyridine nucleotide cytochrome reductase family. As to quaternary structure, monomer. Component of the 2-(3-amino-3-carboxypropyl)histidine synthase complex composed of DPH1, DPH2, DPH3 and a NADH-dependent reductase, predominantly CBR1. FAD is required as a cofactor.

It localises to the mitochondrion outer membrane. It carries out the reaction 2 Fe(III)-[cytochrome b5] + NADH = 2 Fe(II)-[cytochrome b5] + NAD(+) + H(+). It catalyses the reaction 2 Fe(3+)-[Dph3] + NADH = 2 Fe(2+)-[Dph3] + NAD(+) + H(+). It participates in protein modification; peptidyl-diphthamide biosynthesis. Functionally, NADH-dependent reductase for DPH3 and cytochrome b5. Required for the first step of diphthamide biosynthesis, a post-translational modification of histidine which occurs in elongation factor 2. DPH1 and DPH2 transfer a 3-amino-3-carboxypropyl (ACP) group from S-adenosyl-L-methionine (SAM) to a histidine residue, the reaction is assisted by a reduction system comprising DPH3 and a NADH-dependent reductase, predominantly CBR1. By reducing DPH3, also involved in the formation of the tRNA wobble base modification mcm5s 2U (5-methoxycarbonylmethyl-2-thiouridine), mediated by the elongator complex. The cytochrome b5/NADH cytochrome b5 reductase electron transfer system supports the catalytic activity of several sterol biosynthetic enzymes. In Eremothecium gossypii (strain ATCC 10895 / CBS 109.51 / FGSC 9923 / NRRL Y-1056) (Yeast), this protein is NADH-cytochrome b5 reductase 1 (CBR1).